The primary structure comprises 212 residues: Thiamine-phosphate synthase (212 aa).

Residues 40 to 44 and Asn75 contribute to the 4-amino-2-methyl-5-(diphosphooxymethyl)pyrimidine site; that span reads QFREK. Mg(2+)-binding residues include Asp76 and Asp95. Ser113 contacts 4-amino-2-methyl-5-(diphosphooxymethyl)pyrimidine. 139 to 141 lines the 2-[(2R,5Z)-2-carboxy-4-methylthiazol-5(2H)-ylidene]ethyl phosphate pocket; the sequence is TTS. Lys142 is a binding site for 4-amino-2-methyl-5-(diphosphooxymethyl)pyrimidine. Residues Gly171 and 191–192 contribute to the 2-[(2R,5Z)-2-carboxy-4-methylthiazol-5(2H)-ylidene]ethyl phosphate site; that span reads IS.

The protein belongs to the thiamine-phosphate synthase family. Requires Mg(2+) as cofactor.

The catalysed reaction is 2-[(2R,5Z)-2-carboxy-4-methylthiazol-5(2H)-ylidene]ethyl phosphate + 4-amino-2-methyl-5-(diphosphooxymethyl)pyrimidine + 2 H(+) = thiamine phosphate + CO2 + diphosphate. The enzyme catalyses 2-(2-carboxy-4-methylthiazol-5-yl)ethyl phosphate + 4-amino-2-methyl-5-(diphosphooxymethyl)pyrimidine + 2 H(+) = thiamine phosphate + CO2 + diphosphate. It carries out the reaction 4-methyl-5-(2-phosphooxyethyl)-thiazole + 4-amino-2-methyl-5-(diphosphooxymethyl)pyrimidine + H(+) = thiamine phosphate + diphosphate. Its pathway is cofactor biosynthesis; thiamine diphosphate biosynthesis; thiamine phosphate from 4-amino-2-methyl-5-diphosphomethylpyrimidine and 4-methyl-5-(2-phosphoethyl)-thiazole: step 1/1. Its function is as follows. Condenses 4-methyl-5-(beta-hydroxyethyl)thiazole monophosphate (THZ-P) and 2-methyl-4-amino-5-hydroxymethyl pyrimidine pyrophosphate (HMP-PP) to form thiamine monophosphate (TMP). The chain is Thiamine-phosphate synthase from Staphylococcus saprophyticus subsp. saprophyticus (strain ATCC 15305 / DSM 20229 / NCIMB 8711 / NCTC 7292 / S-41).